The sequence spans 227 residues: Ribonuclease HII (227 aa).

Residues 1-210 (MKLAGIDEAG…LKKIEEKLAK (210 aa)) enclose the RNase H type-2 domain. A divalent metal cation-binding residues include Asp7, Glu8, and Asp105.

Belongs to the RNase HII family. Requires Mn(2+) as cofactor. The cofactor is Mg(2+).

The protein localises to the cytoplasm. The enzyme catalyses Endonucleolytic cleavage to 5'-phosphomonoester.. In terms of biological role, endonuclease that specifically degrades the RNA of RNA-DNA hybrids. This Thermococcus onnurineus (strain NA1) protein is Ribonuclease HII.